A 376-amino-acid chain; its full sequence is Chaperone protein DnaJ (376 aa).

Residues 5 to 70 (DYYEVLGVAR…NKRRAYDAHG (66 aa)) enclose the J domain. The CR-type zinc finger occupies 132 to 209 (GIERRIEIPT…CHGAGRVEED (78 aa)). Residues Cys145, Cys148, Cys161, Cys164, Cys183, Cys186, Cys197, and Cys200 each coordinate Zn(2+). 4 CXXCXGXG motif repeats span residues 145 to 152 (CEPCHGSG), 161 to 168 (CATCHGRG), 183 to 190 (CPHCDGRG), and 197 to 204 (CKTCHGAG).

The protein belongs to the DnaJ family. Homodimer. Requires Zn(2+) as cofactor.

Its subcellular location is the cytoplasm. In terms of biological role, participates actively in the response to hyperosmotic and heat shock by preventing the aggregation of stress-denatured proteins and by disaggregating proteins, also in an autonomous, DnaK-independent fashion. Unfolded proteins bind initially to DnaJ; upon interaction with the DnaJ-bound protein, DnaK hydrolyzes its bound ATP, resulting in the formation of a stable complex. GrpE releases ADP from DnaK; ATP binding to DnaK triggers the release of the substrate protein, thus completing the reaction cycle. Several rounds of ATP-dependent interactions between DnaJ, DnaK and GrpE are required for fully efficient folding. Also involved, together with DnaK and GrpE, in the DNA replication of plasmids through activation of initiation proteins. This Xanthomonas campestris pv. campestris (strain 8004) protein is Chaperone protein DnaJ.